Here is a 295-residue protein sequence, read N- to C-terminus: Sulfotransferase 1A1 (295 aa).

48–53 (KSGTTW) lines the 3'-phosphoadenylyl sulfate pocket. 106–108 (KTH) contacts substrate. The Proton acceptor role is filled by His108. Residues Arg130, Ser138, Tyr193, 227–232 (TSFKEM), and 255–259 (FMRKG) each bind 3'-phosphoadenylyl sulfate. Ser138 bears the Phosphoserine mark.

The protein belongs to the sulfotransferase 1 family. Homodimer. Distal lung parenchyma.

Its subcellular location is the cytoplasm. The catalysed reaction is a phenol + 3'-phosphoadenylyl sulfate = an aryl sulfate + adenosine 3',5'-bisphosphate + H(+). It carries out the reaction 17beta-estradiol + 3'-phosphoadenylyl sulfate = 17beta-estradiol 3-sulfate + adenosine 3',5'-bisphosphate + H(+). It catalyses the reaction 4-ethylphenol + 3'-phosphoadenylyl sulfate = 4-ethylphenyl sulfate + adenosine 3',5'-bisphosphate + H(+). The enzyme catalyses 4-nitrophenol + 3'-phosphoadenylyl sulfate = 4-nitrophenyl sulfate + adenosine 3',5'-bisphosphate. The catalysed reaction is dopamine + 3'-phosphoadenylyl sulfate = dopamine 3-O-sulfate + adenosine 3',5'-bisphosphate + H(+). It carries out the reaction dopamine + 3'-phosphoadenylyl sulfate = dopamine 4-O-sulfate + adenosine 3',5'-bisphosphate + H(+). It catalyses the reaction 3,3',5-triiodo-L-thyronine + 3'-phosphoadenylyl sulfate = 3,3',5-triiodo-L-thyronine sulfate + adenosine 3',5'-bisphosphate + H(+). The enzyme catalyses 3,3',5'-triiodo-L-thyronine + 3'-phosphoadenylyl sulfate = 3,3',5'-triiodo-L-thyronine sulfate + adenosine 3',5'-bisphosphate + H(+). The catalysed reaction is 3,3'-diiodo-L-thyronine + 3'-phosphoadenylyl sulfate = 3,3'-diiodo-L-thyronine sulfate + adenosine 3',5'-bisphosphate + H(+). It carries out the reaction L-thyroxine + 3'-phosphoadenylyl sulfate = L-thyroxine sulfate + adenosine 3',5'-bisphosphate + H(+). In terms of biological role, sulfotransferase that utilizes 3'-phospho-5'-adenylyl sulfate (PAPS) as sulfonate donor to catalyze the sulfate conjugation of a wide variety of acceptor molecules bearing a hydroxyl or an amine group. Sulfonation increases the water solubility of most compounds, and therefore their renal excretion, but it can also result in bioactivation to form active metabolites. Displays broad substrate specificity for small phenolic compounds. Plays an important role in the sulfonation of endogenous molecules such as steroid hormones. Mediates also the metabolic activation of carcinogenic N-hydroxyarylamines leading to highly reactive intermediates capable of forming DNA adducts, potentially resulting in mutagenesis. May play a role in gut microbiota-host metabolic interaction. O-sulfonates 4-ethylphenol (4-EP), a dietary tyrosine-derived metabolite produced by gut bacteria. The product 4-EPS crosses the blood-brain barrier and may negatively regulate oligodendrocyte maturation and myelination, affecting the functional connectivity of different brain regions associated with the limbic system. Catalyzes the sulfate conjugation of dopamine. Catalyzes the sulfation of T4 (L-thyroxine/3,5,3',5'-tetraiodothyronine), T3 (3,5,3'-triiodothyronine), rT3 (3,3',5'-triiodothyronine) and 3,3'-T2 (3,3'-diiodothyronine), with a substrate preference of 3,3'-T2 &gt; rT3 &gt; T3 &gt; T4. This is Sulfotransferase 1A1 (SULT1A1) from Bos taurus (Bovine).